Consider the following 718-residue polypeptide: Catalase-peroxidase (718 aa).

Positions 92-220 (WHAAGTYRTA…LASVMMGLIY (129 aa)) form a cross-link, tryptophyl-tyrosyl-methioninium (Trp-Tyr) (with M-246). Catalysis depends on histidine 93, which acts as the Proton acceptor. The segment at residues 220–246 (YVNPEGVDGHPDPLKTANDVRVTFERM) is a cross-link (tryptophyl-tyrosyl-methioninium (Tyr-Met) (with W-92)). Position 261 (histidine 261) interacts with heme b.

This sequence belongs to the peroxidase family. Peroxidase/catalase subfamily. Homodimer or homotetramer. Heme b is required as a cofactor. Post-translationally, formation of the three residue Trp-Tyr-Met cross-link is important for the catalase, but not the peroxidase activity of the enzyme.

The enzyme catalyses H2O2 + AH2 = A + 2 H2O. The catalysed reaction is 2 H2O2 = O2 + 2 H2O. Functionally, bifunctional enzyme with both catalase and broad-spectrum peroxidase activity. This Shewanella halifaxensis (strain HAW-EB4) protein is Catalase-peroxidase.